A 597-amino-acid chain; its full sequence is Sialic acid-binding Ig-like lectin 12 (597 aa).

The signal sequence occupies residues 1–20; that stretch reads MLLLLLLLLLPPLLCGRVGA. Ig-like V-type domains are found at residues 21 to 144 and 145 to 271; these read KEQK…VNVT and ASQD…VHVT. Residues 21-483 lie on the Extracellular side of the membrane; the sequence is KEQKDYLLTM…RPISGVTLGA (463 aa). An intrachain disulfide couples Cys-46 to Cys-106. Residues Asn-142, Asn-181, Asn-232, and Asn-292 are each glycosylated (N-linked (GlcNAc...) asparagine). 3 cysteine pairs are disulfide-bonded: Cys-168/Cys-301, Cys-173/Cys-233, and Cys-295/Cys-344. The Ig-like C2-type 1 domain maps to 277-360; it reads PTFSIPGTLE…AGVTTTRAVR (84 aa). Asn-362, Asn-369, and Asn-387 each carry an N-linked (GlcNAc...) asparagine glycan. The Ig-like C2-type 2 domain occupies 367–464; it reads PQNLTMTVFQ…GSQHISLSLS (98 aa). An intrachain disulfide couples Cys-403 to Cys-448. The helical transmembrane segment at 484 to 504 threads the bilayer; that stretch reads VGGAGATALVFLSFCIIFVVV. The Cytoplasmic portion of the chain corresponds to 505 to 597; the sequence is RSCRKKSARP…YEYSEINILK (93 aa). Residues 514 to 558 form a disordered region; sequence PAVGVGDTGMEDTNAVRGSASQGPLIESPADDSPPHHAPPALATP. The short motif at 565–570 is the ITIM motif element; sequence IQYASL. 2 positions are modified to phosphotyrosine: Tyr-567 and Tyr-590. Positions 588 to 593 match the SLAM-like motif motif; sequence YEYSEI.

Belongs to the immunoglobulin superfamily. SIGLEC (sialic acid binding Ig-like lectin) family.

The protein localises to the membrane. In terms of biological role, putative adhesion molecule that mediates sialic-acid dependent binding to cells. The sialic acid recognition site may be masked by cis interactions with sialic acids on the same cell surface. The chain is Sialic acid-binding Ig-like lectin 12 (SIGLEC12) from Pan troglodytes (Chimpanzee).